Reading from the N-terminus, the 247-residue chain is Transmembrane protein 69 (247 aa).

The next 5 membrane-spanning stretches (helical) occupy residues 97–117 (ALCVTLAGLIPFVAPPLVMLM), 122–142 (IPILAFTQMAYGASFLSFLGG), 159–179 (YLNLASSAAPLFFSWFAFLIS), 185–205 (AIVTVIMGMGVAFHLELFLLP), and 216–236 (IVVTLLATFSFIITLVVKSSF).

The protein resides in the membrane. The protein is Transmembrane protein 69 (TMEM69) of Homo sapiens (Human).